A 485-amino-acid polypeptide reads, in one-letter code: NADH-quinone oxidoreductase subunit N (485 aa).

14 helical membrane-spanning segments follow: residues 8 to 28, 35 to 55, 71 to 91, 105 to 125, 127 to 147, 159 to 179, 203 to 223, 235 to 255, 271 to 291, 297 to 317, 326 to 346, 373 to 393, 408 to 430, and 455 to 475; these read LIAL…MLSI, FLNA…LWFV, GFAM…CTFA, FYLL…ANHL, ALFL…GYAF, YTIL…LVYA, LLAG…LVPF, PAPV…GVVM, VVLG…ALSQ, LLGY…IALQ, VGVY…VVSL, AAVM…LGFI, WWLV…RVAV, and IVVL…QPLI.

Belongs to the complex I subunit 2 family. In terms of assembly, NDH-1 is composed of 13 different subunits. Subunits NuoA, H, J, K, L, M, N constitute the membrane sector of the complex.

It is found in the cell inner membrane. It carries out the reaction a quinone + NADH + 5 H(+)(in) = a quinol + NAD(+) + 4 H(+)(out). NDH-1 shuttles electrons from NADH, via FMN and iron-sulfur (Fe-S) centers, to quinones in the respiratory chain. The immediate electron acceptor for the enzyme in this species is believed to be ubiquinone. Couples the redox reaction to proton translocation (for every two electrons transferred, four hydrogen ions are translocated across the cytoplasmic membrane), and thus conserves the redox energy in a proton gradient. This chain is NADH-quinone oxidoreductase subunit N, found in Salmonella dublin (strain CT_02021853).